The chain runs to 220 residues: Fructose-6-phosphate aldolase (220 aa).

The Schiff-base intermediate with substrate role is filled by Lys85.

The protein belongs to the transaldolase family. Type 3A subfamily. Homodecamer.

The protein localises to the cytoplasm. The enzyme catalyses beta-D-fructose 6-phosphate = dihydroxyacetone + D-glyceraldehyde 3-phosphate. Its function is as follows. Catalyzes the reversible formation of fructose 6-phosphate from dihydroxyacetone and D-glyceraldehyde 3-phosphate via an aldolization reaction. The protein is Fructose-6-phosphate aldolase of Salmonella typhi.